The following is a 262-amino-acid chain: Phosphatidylserine decarboxylase proenzyme (262 aa).

Active-site charge relay system; for autoendoproteolytic cleavage activity residues include Asp86, His142, and Ser226. Ser226 functions as the Schiff-base intermediate with substrate; via pyruvic acid; for decarboxylase activity in the catalytic mechanism. A Pyruvic acid (Ser); by autocatalysis modification is found at Ser226.

Belongs to the phosphatidylserine decarboxylase family. PSD-B subfamily. Prokaryotic type I sub-subfamily. In terms of assembly, heterodimer of a large membrane-associated beta subunit and a small pyruvoyl-containing alpha subunit. It depends on pyruvate as a cofactor. In terms of processing, is synthesized initially as an inactive proenzyme. Formation of the active enzyme involves a self-maturation process in which the active site pyruvoyl group is generated from an internal serine residue via an autocatalytic post-translational modification. Two non-identical subunits are generated from the proenzyme in this reaction, and the pyruvate is formed at the N-terminus of the alpha chain, which is derived from the carboxyl end of the proenzyme. The autoendoproteolytic cleavage occurs by a canonical serine protease mechanism, in which the side chain hydroxyl group of the serine supplies its oxygen atom to form the C-terminus of the beta chain, while the remainder of the serine residue undergoes an oxidative deamination to produce ammonia and the pyruvoyl prosthetic group on the alpha chain. During this reaction, the Ser that is part of the protease active site of the proenzyme becomes the pyruvoyl prosthetic group, which constitutes an essential element of the active site of the mature decarboxylase.

It localises to the cell membrane. The enzyme catalyses a 1,2-diacyl-sn-glycero-3-phospho-L-serine + H(+) = a 1,2-diacyl-sn-glycero-3-phosphoethanolamine + CO2. It participates in phospholipid metabolism; phosphatidylethanolamine biosynthesis; phosphatidylethanolamine from CDP-diacylglycerol: step 2/2. Its function is as follows. Catalyzes the formation of phosphatidylethanolamine (PtdEtn) from phosphatidylserine (PtdSer). The sequence is that of Phosphatidylserine decarboxylase proenzyme from Bacillus cereus (strain AH820).